The primary structure comprises 693 residues: Polyribonucleotide nucleotidyltransferase (693 aa).

Mg(2+) is bound by residues D489 and D495. One can recognise a KH domain in the interval 556–615 (PQIHVMNINPAKIKDVVGRGGATVKGIVEKTGAQIDTSDSGEVKVFAKDKKSMDMAVAMI). An S1 motif domain is found at 625 to 693 (GQVYKGKIVK…GRVKLSLVAR (69 aa)).

The protein belongs to the polyribonucleotide nucleotidyltransferase family. Component of the RNA degradosome, which is a multiprotein complex involved in RNA processing and mRNA degradation. Mg(2+) serves as cofactor.

Its subcellular location is the cytoplasm. It carries out the reaction RNA(n+1) + phosphate = RNA(n) + a ribonucleoside 5'-diphosphate. Its function is as follows. Involved in mRNA degradation. Catalyzes the phosphorolysis of single-stranded polyribonucleotides processively in the 3'- to 5'-direction. This chain is Polyribonucleotide nucleotidyltransferase, found in Francisella tularensis subsp. tularensis (strain WY96-3418).